The following is a 138-amino-acid chain: Small ribosomal subunit protein uS11c (138 aa).

Residues 1–23 form a disordered region; sequence MAKPIQRIGSRRNGPIGSRKNGR.

The protein belongs to the universal ribosomal protein uS11 family. As to quaternary structure, part of the 30S ribosomal subunit.

Its subcellular location is the plastid. The protein localises to the chloroplast. The protein is Small ribosomal subunit protein uS11c of Platanus occidentalis (Sycamore).